Here is a 160-residue protein sequence, read N- to C-terminus: Small ribosomal subunit protein bS16 (160 aa).

Positions 115–139 (GGPTTEATRPKKKVSAKKAAKAVES) are disordered. The segment covering 124–134 (PKKKVSAKKAA) has biased composition (basic residues).

This sequence belongs to the bacterial ribosomal protein bS16 family.

The sequence is that of Small ribosomal subunit protein bS16 from Mycobacterium leprae (strain Br4923).